A 299-amino-acid polypeptide reads, in one-letter code: 4-diphosphocytidyl-2-C-methyl-D-erythritol kinase (299 aa).

K17 is an active-site residue. 103 to 113 is an ATP binding site; the sequence is PVASGIGGGSG. Residue D145 is part of the active site.

This sequence belongs to the GHMP kinase family. IspE subfamily.

The enzyme catalyses 4-CDP-2-C-methyl-D-erythritol + ATP = 4-CDP-2-C-methyl-D-erythritol 2-phosphate + ADP + H(+). Its pathway is isoprenoid biosynthesis; isopentenyl diphosphate biosynthesis via DXP pathway; isopentenyl diphosphate from 1-deoxy-D-xylulose 5-phosphate: step 3/6. Its function is as follows. Catalyzes the phosphorylation of the position 2 hydroxy group of 4-diphosphocytidyl-2C-methyl-D-erythritol. The sequence is that of 4-diphosphocytidyl-2-C-methyl-D-erythritol kinase from Bartonella tribocorum (strain CIP 105476 / IBS 506).